A 269-amino-acid polypeptide reads, in one-letter code: 3-deoxy-manno-octulosonate cytidylyltransferase (269 aa).

This sequence belongs to the KdsB family.

The protein resides in the cytoplasm. It catalyses the reaction 3-deoxy-alpha-D-manno-oct-2-ulosonate + CTP = CMP-3-deoxy-beta-D-manno-octulosonate + diphosphate. The protein operates within nucleotide-sugar biosynthesis; CMP-3-deoxy-D-manno-octulosonate biosynthesis; CMP-3-deoxy-D-manno-octulosonate from 3-deoxy-D-manno-octulosonate and CTP: step 1/1. It functions in the pathway bacterial outer membrane biogenesis; lipopolysaccharide biosynthesis. Functionally, activates KDO (a required 8-carbon sugar) for incorporation into bacterial lipopolysaccharide in Gram-negative bacteria. This chain is 3-deoxy-manno-octulosonate cytidylyltransferase, found in Cupriavidus taiwanensis (strain DSM 17343 / BCRC 17206 / CCUG 44338 / CIP 107171 / LMG 19424 / R1) (Ralstonia taiwanensis (strain LMG 19424)).